Consider the following 213-residue polypeptide: MGFVIAVDGPAASGKGTVAGRLAALYGYPLLDTGLLYRAVGVAILDGAGDLDDPIAAEAVARALDLSALDRAEVRTRAAGEAASRCAVHPGVRAALLDLQQTFAAREPGSVIDGRDIGTVIAPHAPAKLYVTARPEVRAERRWKQLVGQGEDVAFEDILADIHKRDARDGGRKDAPMTQAPDAVLLDTSEMTIEQAFDAARRIVEDARARHRL.

ATP is bound at residue 9–17; sequence GPAASGKGT.

Belongs to the cytidylate kinase family. Type 1 subfamily.

The protein localises to the cytoplasm. The enzyme catalyses CMP + ATP = CDP + ADP. The catalysed reaction is dCMP + ATP = dCDP + ADP. This is Cytidylate kinase from Caulobacter vibrioides (strain ATCC 19089 / CIP 103742 / CB 15) (Caulobacter crescentus).